Consider the following 379-residue polypeptide: Cyclin-dependent kinase-like 4 (379 aa).

Positions 4 to 286 (YEKLAKTGEG…CSQLLESSYF (283 aa)) constitute a Protein kinase domain. ATP contacts are provided by residues 10–18 (TGEGSYGVV) and Lys-33. Residues 45–51 (KKIALRE) carry the [NKR]KIAxRE motif. Asp-126 acts as the Proton acceptor in catalysis.

Belongs to the protein kinase superfamily. CMGC Ser/Thr protein kinase family. CDC2/CDKX subfamily.

The protein localises to the cytoplasm. The enzyme catalyses L-seryl-[protein] + ATP = O-phospho-L-seryl-[protein] + ADP + H(+). The catalysed reaction is L-threonyl-[protein] + ATP = O-phospho-L-threonyl-[protein] + ADP + H(+). The sequence is that of Cyclin-dependent kinase-like 4 (CDKL4) from Homo sapiens (Human).